Here is a 448-residue protein sequence, read N- to C-terminus: Methylenetetrahydrofolate--tRNA-(uracil-5-)-methyltransferase TrmFO (448 aa).

13–18 serves as a coordination point for FAD; sequence GAGLAG.

This sequence belongs to the MnmG family. TrmFO subfamily. Requires FAD as cofactor.

Its subcellular location is the cytoplasm. The catalysed reaction is uridine(54) in tRNA + (6R)-5,10-methylene-5,6,7,8-tetrahydrofolate + NADH + H(+) = 5-methyluridine(54) in tRNA + (6S)-5,6,7,8-tetrahydrofolate + NAD(+). The enzyme catalyses uridine(54) in tRNA + (6R)-5,10-methylene-5,6,7,8-tetrahydrofolate + NADPH + H(+) = 5-methyluridine(54) in tRNA + (6S)-5,6,7,8-tetrahydrofolate + NADP(+). Its function is as follows. Catalyzes the folate-dependent formation of 5-methyl-uridine at position 54 (M-5-U54) in all tRNAs. The polypeptide is Methylenetetrahydrofolate--tRNA-(uracil-5-)-methyltransferase TrmFO (Streptococcus pyogenes serotype M4 (strain MGAS10750)).